The following is a 385-amino-acid chain: 1-deoxy-D-xylulose 5-phosphate reductoisomerase (385 aa).

NADPH contacts are provided by T10, G11, S12, I13, K37, and N124. K125 is a 1-deoxy-D-xylulose 5-phosphate binding site. Residue E126 participates in NADPH binding. D150 provides a ligand contact to Mn(2+). Residues S151, E152, S176, and H199 each contribute to the 1-deoxy-D-xylulose 5-phosphate site. Residue E152 coordinates Mn(2+). Position 205 (G205) interacts with NADPH. 1-deoxy-D-xylulose 5-phosphate is bound by residues S212, N217, K218, and E221. Mn(2+) is bound at residue E221.

This sequence belongs to the DXR family. It depends on Mg(2+) as a cofactor. Requires Mn(2+) as cofactor.

The enzyme catalyses 2-C-methyl-D-erythritol 4-phosphate + NADP(+) = 1-deoxy-D-xylulose 5-phosphate + NADPH + H(+). The protein operates within isoprenoid biosynthesis; isopentenyl diphosphate biosynthesis via DXP pathway; isopentenyl diphosphate from 1-deoxy-D-xylulose 5-phosphate: step 1/6. Its function is as follows. Catalyzes the NADPH-dependent rearrangement and reduction of 1-deoxy-D-xylulose-5-phosphate (DXP) to 2-C-methyl-D-erythritol 4-phosphate (MEP). This chain is 1-deoxy-D-xylulose 5-phosphate reductoisomerase, found in Clostridium botulinum (strain 657 / Type Ba4).